A 393-amino-acid polypeptide reads, in one-letter code: Lipid-A-disaccharide synthase (393 aa).

It belongs to the LpxB family.

It carries out the reaction a lipid X + a UDP-2-N,3-O-bis[(3R)-3-hydroxyacyl]-alpha-D-glucosamine = a lipid A disaccharide + UDP + H(+). Its pathway is bacterial outer membrane biogenesis; LPS lipid A biosynthesis. In terms of biological role, condensation of UDP-2,3-diacylglucosamine and 2,3-diacylglucosamine-1-phosphate to form lipid A disaccharide, a precursor of lipid A, a phosphorylated glycolipid that anchors the lipopolysaccharide to the outer membrane of the cell. The chain is Lipid-A-disaccharide synthase from Actinobacillus pleuropneumoniae serotype 7 (strain AP76).